Here is a 377-residue protein sequence, read N- to C-terminus: Uroporphyrinogen decarboxylase (377 aa).

Substrate is bound by residues 40–44 (RQAGR), D89, Y169, S224, and H354.

The protein belongs to the uroporphyrinogen decarboxylase family. In terms of assembly, homodimer.

It localises to the cytoplasm. It carries out the reaction uroporphyrinogen III + 4 H(+) = coproporphyrinogen III + 4 CO2. The protein operates within porphyrin-containing compound metabolism; protoporphyrin-IX biosynthesis; coproporphyrinogen-III from 5-aminolevulinate: step 4/4. In terms of biological role, catalyzes the decarboxylation of four acetate groups of uroporphyrinogen-III to yield coproporphyrinogen-III. In Leifsonia xyli subsp. xyli (strain CTCB07), this protein is Uroporphyrinogen decarboxylase.